The chain runs to 264 residues: uncharacterized protein (264 aa).

The chain crosses the membrane as a helical span at residues 9 to 29 (LVISILSLIATLSISFNIYFI).

It is found in the membrane. This is an uncharacterized protein from Ureaplasma parvum serovar 3 (strain ATCC 700970).